The sequence spans 264 residues: Tritrans,polycis-undecaprenyl-diphosphate synthase (geranylgeranyl-diphosphate specific) (264 aa).

Asp43 is an active-site residue. Asp43 contacts Mg(2+). Substrate-binding positions include 44 to 47 (GNRR), Trp48, His60, and 88 to 90 (STE). The active-site Proton acceptor is the Asn91. Residues Phe92, Arg94, Arg213, and 219-221 (RIS) contribute to the substrate site. Residue Glu232 coordinates Mg(2+).

The protein belongs to the UPP synthase family. In terms of assembly, homodimer. Mg(2+) is required as a cofactor.

It catalyses the reaction geranylgeranyl diphosphate + 7 isopentenyl diphosphate = tri-trans,hepta-cis-undecaprenyl diphosphate + 7 diphosphate. Catalyzes the sequential condensation of isopentenyl diphosphate (IPP) with geranylgeranyl diphosphate (GGPP) to yield (2Z,6Z,10Z,14Z,18Z,22Z,26Z,30E,34E,38E)-undecaprenyl diphosphate (tritrans,heptacis-UPP). It is probably the precursor of glycosyl carrier lipids. This is Tritrans,polycis-undecaprenyl-diphosphate synthase (geranylgeranyl-diphosphate specific) from Pyrococcus abyssi (strain GE5 / Orsay).